The chain runs to 270 residues: tRNA pseudouridine synthase A (270 aa).

Catalysis depends on aspartate 60, which acts as the Nucleophile. The tract at residues 107–111 is RNA binding; sequence FHARF. Substrate is bound at residue tyrosine 118. The segment at 168 to 172 is interaction with tRNA; the sequence is QCQSR.

This sequence belongs to the tRNA pseudouridine synthase TruA family. In terms of assembly, homodimer.

The catalysed reaction is uridine(38/39/40) in tRNA = pseudouridine(38/39/40) in tRNA. Its function is as follows. Formation of pseudouridine at positions 38, 39 and 40 in the anticodon stem and loop of transfer RNAs. The polypeptide is tRNA pseudouridine synthase A (Shigella boydii serotype 18 (strain CDC 3083-94 / BS512)).